A 366-amino-acid polypeptide reads, in one-letter code: Anhydro-N-acetylmuramic acid kinase (366 aa).

Residue 10–17 (GTSMDGID) participates in ATP binding.

It belongs to the anhydro-N-acetylmuramic acid kinase family.

It catalyses the reaction 1,6-anhydro-N-acetyl-beta-muramate + ATP + H2O = N-acetyl-D-muramate 6-phosphate + ADP + H(+). Its pathway is amino-sugar metabolism; 1,6-anhydro-N-acetylmuramate degradation. It functions in the pathway cell wall biogenesis; peptidoglycan recycling. Its function is as follows. Catalyzes the specific phosphorylation of 1,6-anhydro-N-acetylmuramic acid (anhMurNAc) with the simultaneous cleavage of the 1,6-anhydro ring, generating MurNAc-6-P. Is required for the utilization of anhMurNAc either imported from the medium or derived from its own cell wall murein, and thus plays a role in cell wall recycling. This chain is Anhydro-N-acetylmuramic acid kinase, found in Legionella pneumophila subsp. pneumophila (strain Philadelphia 1 / ATCC 33152 / DSM 7513).